We begin with the raw amino-acid sequence, 86 residues long: RNA-binding protein Hfq (86 aa).

In terms of domain architecture, Sm spans 9–68 (DPYLNTLRKEKVPVSIYLVNGIKLQGSIESFDQFVVLLKNTVSQMVYKHAISTVVPARPV). The interval 66–86 (RPVRLPSPTDSEHGDSEPGNA) is disordered. The span at 75-86 (DSEHGDSEPGNA) shows a compositional bias: basic and acidic residues.

The protein belongs to the Hfq family. Homohexamer.

Its function is as follows. RNA chaperone that binds small regulatory RNA (sRNAs) and mRNAs to facilitate mRNA translational regulation in response to envelope stress, environmental stress and changes in metabolite concentrations. Also binds with high specificity to tRNAs. The sequence is that of RNA-binding protein Hfq from Pseudomonas putida (strain ATCC 700007 / DSM 6899 / JCM 31910 / BCRC 17059 / LMG 24140 / F1).